The chain runs to 180 residues: uncharacterized protein (180 aa).

The signal sequence occupies residues Met1 to Ala24.

Its function is as follows. Part of the elfADCG-ycbUVF fimbrial operon, which promotes adhesion of bacteria to different abiotic surfaces. This is an uncharacterized protein from Escherichia coli (strain K12).